The primary structure comprises 1255 residues: Receptor tyrosine-protein kinase erbB-2 (1255 aa).

The N-terminal stretch at 1–22 (MELAALCRWGLLLALLPPGAAS) is a signal peptide. The Extracellular segment spans residues 23–652 (TQVCTGTDMK…PAEQRASPLT (630 aa)). Cysteine 26 and cysteine 53 are disulfide-bonded. Residues asparagine 68 and asparagine 124 are each glycosylated (N-linked (GlcNAc...) asparagine). Disulfide bonds link cysteine 162–cysteine 192, cysteine 195–cysteine 204, cysteine 199–cysteine 212, cysteine 220–cysteine 227, cysteine 224–cysteine 235, cysteine 236–cysteine 244, cysteine 240–cysteine 252, cysteine 255–cysteine 264, cysteine 268–cysteine 295, cysteine 299–cysteine 311, cysteine 315–cysteine 331, cysteine 334–cysteine 338, cysteine 342–cysteine 367, cysteine 475–cysteine 504, cysteine 511–cysteine 520, and cysteine 515–cysteine 528. Position 182 is a phosphothreonine (threonine 182). An N-linked (GlcNAc...) asparagine glycan is attached at asparagine 187. The N-linked (GlcNAc...) asparagine glycan is linked to asparagine 259. Asparagine 530 carries an N-linked (GlcNAc...) asparagine glycan. 8 disulfides stabilise this stretch: cysteine 531–cysteine 540, cysteine 544–cysteine 560, cysteine 563–cysteine 576, cysteine 567–cysteine 584, cysteine 587–cysteine 596, cysteine 600–cysteine 623, cysteine 626–cysteine 634, and cysteine 630–cysteine 642. The N-linked (GlcNAc...) asparagine glycan is linked to asparagine 571. An N-linked (GlcNAc...) asparagine glycan is attached at asparagine 629. Residues 653 to 675 (SIISAVVGILLVVVLGVVFGILI) form a helical membrane-spanning segment. A required for interaction with KPNB1 and EEA1 region spans residues 676–689 (KRRQQKIRKYTMRR). The Nuclear localization signal signature appears at 676-689 (KRRQQKIRKYTMRR). Residues 676-1255 (KRRQQKIRKY…PEYLGLDVPV (580 aa)) lie on the Cytoplasmic side of the membrane. Positions 720–987 (LRKVKVLGSG…RMARDPQRFV (268 aa)) constitute a Protein kinase domain. Residues 726-734 (LGSGAFGTV) and lysine 753 contribute to the ATP site. The Proton acceptor role is filled by aspartate 845. Residue tyrosine 877 is modified to Phosphotyrosine. 2 disordered regions span residues 1035–1179 (PAPG…GKNG) and 1196–1255 (YLTP…DVPV). Phosphoserine occurs at positions 1054, 1078, 1083, and 1107. Phosphotyrosine is present on residues tyrosine 1112 and tyrosine 1139. The span at 1146–1155 (RPQPPSPREG) shows a compositional bias: pro residues. At serine 1151 the chain carries Phosphoserine. Threonine 1166 is subject to Phosphothreonine. An interaction with PIK3C2B region spans residues 1195 to 1197 (EYL). Phosphotyrosine is present on tyrosine 1196. A Phosphotyrosine; by autocatalysis modification is found at tyrosine 1248.

It belongs to the protein kinase superfamily. Tyr protein kinase family. EGF receptor subfamily. Homodimer. Heterodimer with EGFR, ERBB3 and ERBB4. Part of a complex with EGFR and either PIK3C2A or PIK3C2B. May interact with PIK3C2B when phosphorylated on Tyr-1196. Interacts with PLXNB1. Interacts (when phosphorylated on Tyr-1248) with MEMO1. Interacts with MUC1; the interaction is enhanced by heregulin (HRG). Interacts (when phosphorylated on Tyr-1139) with GRB7 (via SH2 domain). Interacts (when phosphorylated on Tyr-1248) with ERBIN. Interacts with KPNB1, RANBP2, EEA1, CRM1 and CLTC. Interacts with PTK6. Interacts with RPA194 and ACTB. Interacts with PRKCABP, SRC and MYOC. Interacts (preferentially with the tyrosine phosphorylated form) with CPNE3; this interaction occurs at the cell membrane and is increased in a growth factor heregulin-dependent manner. Interacts with HSP90AA1 and HSP90AB1 in an ATP-dependent manner; the interaction suppresses ERBB2 kinase activity. Interacts with SORL1; this interaction regulates ERBB2 subcellular distribution by promoting its recycling after internalization from endosomes back to the plasma membrane, hence stimulates ERBB2-mediated signaling. Interacts with SH3BGRL. Interacts with ROR1. Autophosphorylated. Autophosphorylation occurs in trans, i.e. one subunit of the dimeric receptor phosphorylates tyrosine residues on the other subunit. Ligand-binding increases phosphorylation on tyrosine residues. Signaling via SEMA4C promotes phosphorylation at Tyr-1248. Dephosphorylated by PTPN12. As to expression, expressed in a variety of tumor tissues including primary breast tumors and tumors from small bowel, esophagus, kidney and mouth.

It is found in the cell membrane. The protein resides in the cell projection. The protein localises to the ruffle membrane. It localises to the early endosome. Its subcellular location is the cytoplasm. It is found in the perinuclear region. The protein resides in the nucleus. It catalyses the reaction L-tyrosyl-[protein] + ATP = O-phospho-L-tyrosyl-[protein] + ADP + H(+). Its activity is regulated as follows. Activated by dimerization. Not activated by EGF, TGF-alpha and amphiregulin. Interaction with PTK6 increases its intrinsic kinase activity. Protein tyrosine kinase that is part of several cell surface receptor complexes, but that apparently needs a coreceptor for ligand binding. Essential component of a neuregulin-receptor complex, although neuregulins do not interact with it alone. GP30 is a potential ligand for this receptor. Regulates outgrowth and stabilization of peripheral microtubules (MTs). Upon ERBB2 activation, the MEMO1-RHOA-DIAPH1 signaling pathway elicits the phosphorylation and thus the inhibition of GSK3B at cell membrane. This prevents the phosphorylation of APC and CLASP2, allowing its association with the cell membrane. In turn, membrane-bound APC allows the localization of MACF1 to the cell membrane, which is required for microtubule capture and stabilization. In terms of biological role, in the nucleus is involved in transcriptional regulation. Associates with the 5'-TCAAATTC-3' sequence in the PTGS2/COX-2 promoter and activates its transcription. Implicated in transcriptional activation of CDKN1A; the function involves STAT3 and SRC. Involved in the transcription of rRNA genes by RNA Pol I and enhances protein synthesis and cell growth. The polypeptide is Receptor tyrosine-protein kinase erbB-2 (ERBB2) (Homo sapiens (Human)).